Reading from the N-terminus, the 179-residue chain is uncharacterized protein (179 aa).

This is an uncharacterized protein from Salmonella typhimurium (strain LT2 / SGSC1412 / ATCC 700720).